Reading from the N-terminus, the 353-residue chain is Holliday junction branch migration complex subunit RuvB (353 aa).

The large ATPase domain (RuvB-L) stretch occupies residues M1–Y182. Residues I21, R22, G63, K66, T67, T68, E129–F131, R172, Y182, and R219 contribute to the ATP site. T67 is a binding site for Mg(2+). The interval N183–D253 is small ATPAse domain (RuvB-S). The interval V256–L353 is head domain (RuvB-H). R292, R311, and R316 together coordinate DNA.

The protein belongs to the RuvB family. As to quaternary structure, homohexamer. Forms an RuvA(8)-RuvB(12)-Holliday junction (HJ) complex. HJ DNA is sandwiched between 2 RuvA tetramers; dsDNA enters through RuvA and exits via RuvB. An RuvB hexamer assembles on each DNA strand where it exits the tetramer. Each RuvB hexamer is contacted by two RuvA subunits (via domain III) on 2 adjacent RuvB subunits; this complex drives branch migration. In the full resolvosome a probable DNA-RuvA(4)-RuvB(12)-RuvC(2) complex forms which resolves the HJ.

It is found in the cytoplasm. The catalysed reaction is ATP + H2O = ADP + phosphate + H(+). In terms of biological role, the RuvA-RuvB-RuvC complex processes Holliday junction (HJ) DNA during genetic recombination and DNA repair, while the RuvA-RuvB complex plays an important role in the rescue of blocked DNA replication forks via replication fork reversal (RFR). RuvA specifically binds to HJ cruciform DNA, conferring on it an open structure. The RuvB hexamer acts as an ATP-dependent pump, pulling dsDNA into and through the RuvAB complex. RuvB forms 2 homohexamers on either side of HJ DNA bound by 1 or 2 RuvA tetramers; 4 subunits per hexamer contact DNA at a time. Coordinated motions by a converter formed by DNA-disengaged RuvB subunits stimulates ATP hydrolysis and nucleotide exchange. Immobilization of the converter enables RuvB to convert the ATP-contained energy into a lever motion, pulling 2 nucleotides of DNA out of the RuvA tetramer per ATP hydrolyzed, thus driving DNA branch migration. The RuvB motors rotate together with the DNA substrate, which together with the progressing nucleotide cycle form the mechanistic basis for DNA recombination by continuous HJ branch migration. Branch migration allows RuvC to scan DNA until it finds its consensus sequence, where it cleaves and resolves cruciform DNA. The sequence is that of Holliday junction branch migration complex subunit RuvB from Thioalkalivibrio sulfidiphilus (strain HL-EbGR7).